Consider the following 106-residue polypeptide: Thiosulfate sulfurtransferase GlpE (106 aa).

The 89-residue stretch at 16–104 (REQGAVLVDV…WRTTYPQETV (89 aa)) folds into the Rhodanese domain. C64 (cysteine persulfide intermediate) is an active-site residue.

This sequence belongs to the GlpE family.

Its subcellular location is the cytoplasm. It catalyses the reaction thiosulfate + hydrogen cyanide = thiocyanate + sulfite + 2 H(+). The enzyme catalyses thiosulfate + [thioredoxin]-dithiol = [thioredoxin]-disulfide + hydrogen sulfide + sulfite + 2 H(+). Transferase that catalyzes the transfer of sulfur from thiosulfate to thiophilic acceptors such as cyanide or dithiols. May function in a CysM-independent thiosulfate assimilation pathway by catalyzing the conversion of thiosulfate to sulfite, which can then be used for L-cysteine biosynthesis. This chain is Thiosulfate sulfurtransferase GlpE, found in Pseudomonas syringae pv. syringae (strain B728a).